We begin with the raw amino-acid sequence, 179 residues long: Large ribosomal subunit protein uL6c (179 aa).

It belongs to the universal ribosomal protein uL6 family. Part of the 50S ribosomal subunit.

Its subcellular location is the plastid. The protein localises to the cyanelle. Functionally, binds 23S rRNA. This is Large ribosomal subunit protein uL6c (rpl6) from Cyanophora paradoxa.